We begin with the raw amino-acid sequence, 917 residues long: Protein translocase subunit SecA (917 aa).

ATP is bound by residues Q87, 105–109 (GEGKT), and D513. The interval 834–917 (EEQMNEMEKR…YKSCHGKLTG (84 aa)) is disordered. Basic and acidic residues predominate over residues 839–852 (EMEKRRQEEAERQR). Positions 862–876 (APSQLAAPATPATPE) are enriched in low complexity. Zn(2+)-binding residues include C900, C902, C911, and H912.

Belongs to the SecA family. Monomer and homodimer. Part of the essential Sec protein translocation apparatus which comprises SecA, SecYEG and auxiliary proteins SecDF-YajC and YidC. Requires Zn(2+) as cofactor.

The protein resides in the cell inner membrane. It is found in the cytoplasm. It catalyses the reaction ATP + H2O + cellular proteinSide 1 = ADP + phosphate + cellular proteinSide 2.. Functionally, part of the Sec protein translocase complex. Interacts with the SecYEG preprotein conducting channel. Has a central role in coupling the hydrolysis of ATP to the transfer of proteins into and across the cell membrane, serving both as a receptor for the preprotein-SecB complex and as an ATP-driven molecular motor driving the stepwise translocation of polypeptide chains across the membrane. The chain is Protein translocase subunit SecA from Saccharophagus degradans (strain 2-40 / ATCC 43961 / DSM 17024).